The chain runs to 101 residues: Movement protein (101 aa).

The chain crosses the membrane as a helical span at residues 30 to 50 (EVAILSFVALICIYLLYLWVL).

The protein belongs to the mastrevirus movement protein family. Interacts with the capsid protein (CP). Part of a MP-CP-viral DNA complex.

It is found in the host membrane. Functionally, involved in the viral transport within, and between cells. In Maize streak virus genotype D (isolate Raw) (MSV), this protein is Movement protein.